The chain runs to 274 residues: Sulfur carrier protein FdhD (274 aa).

The active-site Cysteine persulfide intermediate is the cysteine 121. A Mo-bis(molybdopterin guanine dinucleotide)-binding site is contributed by 258-263 (FSKPGR).

Belongs to the FdhD family.

It localises to the cytoplasm. Functionally, required for formate dehydrogenase (FDH) activity. Acts as a sulfur carrier protein that transfers sulfur from IscS to the molybdenum cofactor prior to its insertion into FDH. The protein is Sulfur carrier protein FdhD of Yersinia pestis bv. Antiqua (strain Antiqua).